A 190-amino-acid polypeptide reads, in one-letter code: Threonylcarbamoyl-AMP synthase (190 aa).

Residues 7–190 (NFVLADIVRA…ALTGKRFRQG (184 aa)) form the YrdC-like domain.

The protein belongs to the SUA5 family. TsaC subfamily.

Its subcellular location is the cytoplasm. The enzyme catalyses L-threonine + hydrogencarbonate + ATP = L-threonylcarbamoyladenylate + diphosphate + H2O. Its function is as follows. Required for the formation of a threonylcarbamoyl group on adenosine at position 37 (t(6)A37) in tRNAs that read codons beginning with adenine. Catalyzes the conversion of L-threonine, HCO(3)(-)/CO(2) and ATP to give threonylcarbamoyl-AMP (TC-AMP) as the acyladenylate intermediate, with the release of diphosphate. The sequence is that of Threonylcarbamoyl-AMP synthase from Yersinia pestis bv. Antiqua (strain Angola).